A 572-amino-acid chain; its full sequence is Hsp70-Hsp90 organizing protein 1 (572 aa).

3 TPR repeats span residues Ala2 to Asn35, Val37 to Trp69, and Pro70 to Asn103. An STI1 1 domain is found at Gly133 to Tyr172. A Phosphoserine modification is found at Ser167. Residues Lys189–Lys248 are disordered. Over residues Thr232–Lys248 the composition is skewed to basic and acidic residues. A Bipartite nuclear localization signal motif is present at residues Lys241 to Lys258. TPR repeat units lie at residues Ala244–Asp277, Ser279–Leu311, Ala319–Pro356, Thr358–Leu382, Gly383–Asp416, Lys418–Phe450, and Ser451–Asn484. The region spanning Asp521–Ile560 is the STI1 2 domain.

In terms of assembly, co-chaperone that forms a complex with HSP70 and HSP90 and preproteins (e.g. chloroplast preproteins). Phosphorylated. In terms of processing, acetylated.

The protein resides in the cytoplasm. Its subcellular location is the nucleus. Its function is as follows. Mediates the association of the molecular chaperones HSP70 and HSP90. Mediates nuclear encoded chloroplast preproteins binding to HSP90 prior to chloroplastic sorting. The protein is Hsp70-Hsp90 organizing protein 1 (HOP1) of Arabidopsis thaliana (Mouse-ear cress).